The sequence spans 477 residues: Leukotoxin export protein LtxD (477 aa).

Residues 64–84 (IMLFLTLAIIVSIFSNVEIIA) traverse the membrane as a helical segment. A coiled-coil region spans residues 206-287 (LNLNKKEAEK…ENEVLLAKEE (82 aa)).

This sequence belongs to the membrane fusion protein (MFP) (TC 8.A.1) family. Probably part of a complex composed of LtxB, LtxD and TdeA, which forms a single transport channel across the two membranes.

The protein resides in the cell inner membrane. Its function is as follows. Involved in the export of the LtxA leukotoxin. The polypeptide is Leukotoxin export protein LtxD (Aggregatibacter actinomycetemcomitans (Actinobacillus actinomycetemcomitans)).